We begin with the raw amino-acid sequence, 332 residues long: D-2-hydroxyacid dehydrogenase (NAD(+)) (332 aa).

Residues Arg237 and Glu266 contribute to the active site. His298 (proton donor) is an active-site residue.

It belongs to the D-isomer specific 2-hydroxyacid dehydrogenase family. In terms of assembly, monomer.

It carries out the reaction a (2R)-2-hydroxycarboxylate + NAD(+) = a 2-oxocarboxylate + NADH + H(+). The enzyme catalyses (2R)-hydroxy-4-methylpentanoate + NAD(+) = 4-methyl-2-oxopentanoate + NADH + H(+). It participates in amino-acid degradation; L-leucine degradation. Involved in the reductive branch of L-leucine fermentation. Catalyzes the NADH-dependent reduction of 4-methyl-2-oxopentanoate (2-oxoisocaproate) to (R)-2-hydroxy-4-methylpentanoate ((R)-2-hydroxyisocaproate). For the reverse reaction, the enzyme accepts (R)- but not (S)-2-hydroxy-4-methylpentanoate. Can also use 2-oxopentanoate, 2-oxohexanoate and phenylpyruvate but not 2-oxoisovalerate and 2-oxobutyrate. Cannot use NADPH. This Clostridioides difficile (Peptoclostridium difficile) protein is D-2-hydroxyacid dehydrogenase (NAD(+)).